The chain runs to 102 residues: 10 kDa heat shock protein, mitochondrial (102 aa).

This sequence belongs to the GroES chaperonin family. Homohexamer.

Its subcellular location is the mitochondrion matrix. Eukaryotic CPN10 homolog which is essential for mitochondrial protein biogenesis, together with CPN60. Binds to CPN60 in the presence of Mg-ATP and suppresses the ATPase activity of the latter. This chain is 10 kDa heat shock protein, mitochondrial, found in Schistosoma japonicum (Blood fluke).